Consider the following 286-residue polypeptide: tRNA (guanine-N(7)-)-methyltransferase (286 aa).

Residues S7 and S59 each carry the phosphoserine modification. Residues G103, E126–I127, N161–A162, and C181 contribute to the S-adenosyl-L-methionine site. Residue D184 is part of the active site. T259–E261 is an S-adenosyl-L-methionine binding site.

The protein belongs to the class I-like SAM-binding methyltransferase superfamily. TrmB family. In terms of assembly, forms a complex with TRM82.

The protein resides in the nucleus. It carries out the reaction guanosine(46) in tRNA + S-adenosyl-L-methionine = N(7)-methylguanosine(46) in tRNA + S-adenosyl-L-homocysteine. The protein operates within tRNA modification; N(7)-methylguanine-tRNA biosynthesis. In terms of biological role, methyltransferase that catalyzes the formation of N(7)-methylguanine at position 46 (m7G46) in tRNA, a modification required to maintain stability of tRNAs; its absence resulting in tRNA decay. Both the D-stem and T-stem structures of tRNAs are required for efficient methyltransferase activity. The polypeptide is tRNA (guanine-N(7)-)-methyltransferase (Saccharomyces cerevisiae (strain YJM789) (Baker's yeast)).